Reading from the N-terminus, the 403-residue chain is Na(+)-translocating NADH-quinone reductase subunit B (403 aa).

9 consecutive transmembrane segments (helical) span residues 56–76, 121–141, 164–184, 225–245, 260–280, 287–307, 312–332, 348–368, and 371–391; these read MMIIVWLCTFPAMFFGMYNVG, AYFLPVYLTTFIVGGFWEVLF, LPPSVPLWQVALGISFGVVLG, GFAGATSLSLAAAGGVDNILG, GSMGETSTLAIFIGGAVLLLT, IVAGVMLGMVAMSYLFNAIGS, MFAMPWYWHLVTGGFAFGMIF, WLFGALIGVMVMLIRVVNPAF, and GMMLAILFANLFAPLIDHFVV. The residue at position 230 (Thr230) is an FMN phosphoryl threonine.

This sequence belongs to the NqrB/RnfD family. Composed of six subunits; NqrA, NqrB, NqrC, NqrD, NqrE and NqrF. Requires FMN as cofactor.

The protein localises to the cell inner membrane. It catalyses the reaction a ubiquinone + n Na(+)(in) + NADH + H(+) = a ubiquinol + n Na(+)(out) + NAD(+). NQR complex catalyzes the reduction of ubiquinone-1 to ubiquinol by two successive reactions, coupled with the transport of Na(+) ions from the cytoplasm to the periplasm. NqrA to NqrE are probably involved in the second step, the conversion of ubisemiquinone to ubiquinol. This Pseudomonas aeruginosa (strain LESB58) protein is Na(+)-translocating NADH-quinone reductase subunit B.